Reading from the N-terminus, the 1673-residue chain is AF4/FMR2 family member lilli (1673 aa).

9 disordered regions span residues 1-24, 54-80, 125-302, 407-534, 575-604, 722-1086, 1114-1133, 1141-1160, and 1187-1315; these read MAQQQQQQMQQQQQHHTSSINNNN, YSQNYNMEEYERRKRREREKIERQQGI, SRSA…PPEK, QLPP…GAQN, VGTGSGSGGTLSSGGSSSNKTPSPTESNKW, RLSD…INTL, QGKLDAAAQPSAPQAPPAAP, RMTPTQQQQLGAGLASPART, and KLTP…MGKE. The segment covering 71–80 has biased composition (basic and acidic residues); sequence REKIERQQGI. Composition is skewed to low complexity over residues 146 to 180 and 223 to 244; these read SLGHSPSSASSAAGPTAASATTSLPGQQQHYQQQQ and PRTSSSNSNSSSVTNNASSGGV. Thr420 carries the post-translational modification Phosphothreonine. Over residues 428–441 the composition is skewed to basic and acidic residues; it reads LKTEKNHSLEKQDS. A compositionally biased stretch (acidic residues) spans 443–454; that stretch reads LENDLELSESED. A phosphoserine mark is found at Ser450 and Ser452. The segment covering 465–486 has biased composition (low complexity); it reads GNSSNSSESDSSESGSESSSKN. The span at 491–500 shows a compositional bias: basic residues; that stretch reads HPNHQQHHHQ. The span at 501–525 shows a compositional bias: low complexity; it reads LQQQQQQQQATMQQQQVLQQQHRSQ. Residues 577-586 are compositionally biased toward gly residues; it reads TGSGSGGTLS. Positions 594 to 604 are enriched in polar residues; the sequence is KTPSPTESNKW. The segment covering 724-757 has biased composition (low complexity); the sequence is SDSGTSASGSSSSSSSSSDSAMGGEVVPMPGPGE. Residues 775–788 are compositionally biased toward polar residues; sequence QPTQSQKAPPSNSV. The segment covering 802-812 has biased composition (basic residues); that stretch reads QRQKKPRKKKA. Phosphoserine is present on residues Ser821 and Ser822. A DNA-binding region (a.T hook) is located at residues 851–863; sequence KKGRGRPRKQQQS. A compositionally biased stretch (low complexity) spans 860-898; that stretch reads QQQSGGSGNLSSASAGSSSQTKGPTLTAAKKPLAKTPLA. Residues Ser871 and Ser873 each carry the phosphoserine modification. Residues 909–919 show a composition bias toward polar residues; sequence SQSSSNGNTPT. Composition is skewed to low complexity over residues 949–965 and 993–1004; these read SSSAESSSKSSSSSSSS and GSGSSSPSSSGS. A compositionally biased stretch (polar residues) spans 1011 to 1022; it reads TRSQVGSGQALA. A compositionally biased stretch (low complexity) spans 1034 to 1060; the sequence is SQHSQHLSSSDCSSSSGGCTAVCSSSS. Over residues 1065–1082 the composition is skewed to basic and acidic residues; that stretch reads EGRREKERERKPKSDKNK. The span at 1190 to 1205 shows a compositional bias: polar residues; sequence PAQQNGHLTPKDQATN. Basic and acidic residues-rich tracts occupy residues 1226 to 1243 and 1252 to 1282; these read EHPVKPEPELDAGYEAKF and FQLKQERDRDRERERERERERERDREREQPP. Ser1362 bears the Phosphoserine mark. Thr1364 is subject to Phosphothreonine. Positions 1564 to 1583 are enriched in low complexity; the sequence is NTPSSISPSNSVGSQGSGSN. Positions 1564-1588 are disordered; the sequence is NTPSSISPSNSVGSQGSGSNTPPGR.

The protein belongs to the AF4 family. Component of the super elongation complex (SEC), at least composed of Ell, Cdk9, cyclin-T (CycT), lilli and ear.

The protein resides in the nucleus. Has a role in transcriptional regulation. Acts in parallel with the Ras/MAPK and the PI3K/PKB pathways in the control of cell identity and cellular growth. Essential for regulation of the cytoskeleton and cell growth but not for cell proliferation or growth rate. Required specifically for the microtubule-based basal transport of lipid droplets. Plays a partially redundant function downstream of Raf in cell fate specification in the developing eye. Pair-rule protein that regulates embryonic cellularization, gastrulation and segmentation. The sequence is that of AF4/FMR2 family member lilli from Drosophila melanogaster (Fruit fly).